Here is a 95-residue protein sequence, read N- to C-terminus: Small ribosomal subunit protein uS19 (95 aa).

It belongs to the universal ribosomal protein uS19 family.

In terms of biological role, protein S19 forms a complex with S13 that binds strongly to the 16S ribosomal RNA. The chain is Small ribosomal subunit protein uS19 from Clostridium kluyveri (strain NBRC 12016).